A 298-amino-acid chain; its full sequence is Probable pyridoxal 5'-phosphate synthase subunit SNZ2 (298 aa).

A D-ribose 5-phosphate-binding site is contributed by aspartate 21. Catalysis depends on lysine 78, which acts as the Schiff-base intermediate with D-ribose 5-phosphate. D-ribose 5-phosphate is bound by residues glycine 150, glycine 213, and 234 to 235 (GS).

It belongs to the PdxS/SNZ family. As to quaternary structure, homohexamer. Interacts with THI11.

The enzyme catalyses aldehydo-D-ribose 5-phosphate + D-glyceraldehyde 3-phosphate + L-glutamine = pyridoxal 5'-phosphate + L-glutamate + phosphate + 3 H2O + H(+). Its pathway is cofactor biosynthesis; pyridoxal 5'-phosphate biosynthesis. Its function is as follows. Catalyzes the formation of pyridoxal 5'-phosphate from ribose 5-phosphate (RBP), glyceraldehyde 3-phosphate (G3P) and ammonia. The ammonia is provided by a SNO isoform. Can also use ribulose 5-phosphate and dihydroxyacetone phosphate as substrates, resulting from enzyme-catalyzed isomerization of RBP and G3P, respectively. The polypeptide is Probable pyridoxal 5'-phosphate synthase subunit SNZ2 (SNZ2) (Saccharomyces cerevisiae (strain ATCC 204508 / S288c) (Baker's yeast)).